The sequence spans 99 residues: DNA-binding protein Fis (99 aa).

Positions 75-94 (QTRAANMLGINRGTLRKKLK) form a DNA-binding region, H-T-H motif.

It belongs to the transcriptional regulatory Fis family. As to quaternary structure, homodimer.

Its function is as follows. Activates ribosomal RNA transcription. Plays a direct role in upstream activation of rRNA promoters. This Haemophilus influenzae (strain 86-028NP) protein is DNA-binding protein Fis.